The sequence spans 173 residues: Nanos homolog 3 (173 aa).

The interval 23 to 51 (KEGPETRLSPQPEPEPMLEPDQKRSLESS) is disordered. The Nanos-type zinc-finger motif lies at 57-111 (LCSFCKHNGESRAIYQSHVLKDEAGRVLCPILRDYVCPQCGATRERAHTRRFCPL). Zn(2+) is bound by residues Cys-58, Cys-61, His-74, Cys-85, Cys-93, Cys-96, His-104, and Cys-109. 2 short sequence motifs (C2HC) span residues 58-85 (CSFCKHNGESRAIYQSHVLKDEAGRVLC) and 93-109 (CPQCGATRERAHTRRFC). The disordered stretch occupies residues 123-173 (TTRNSAGKKLVRPDKAKTQDTGHRRGGGGGAGFRGAGKSEPSPSCSPSMST). The span at 133 to 145 (VRPDKAKTQDTGH) shows a compositional bias: basic and acidic residues. Positions 161 to 173 (SEPSPSCSPSMST) are enriched in low complexity.

The protein belongs to the nanos family. In terms of assembly, binds mRNA from germ cells. Interacts with PUM2. In terms of tissue distribution, ovary, testis and brain (at protein level). In the ovaries, expressed during multiple stages of oogenesis, including primordial, primary, secondary and antral follicles with the highest expression in the oocytes. In the testis, expressed in germ cells, type A spermatogonia (SA), primary spermatocytes (S1), round spermatids (S3) and elongated spermatids.

It localises to the nucleus. Its subcellular location is the cytoplasm. The protein localises to the stress granule. The protein resides in the P-body. Plays a role in the maintenance of the undifferentiated state of germ cells regulating the spermatogonia cell cycle and inducing a prolonged transit in G1 phase. Affects cell proliferation probably by repressing translation of specific mRNAs. Maintains the germ cell lineage by suppressing both Bax-dependent and -independent apoptotic pathways. Essential in the early stage embryo to protect the migrating primordial germ cells (PGCs) from apoptosis. This chain is Nanos homolog 3 (NANOS3), found in Homo sapiens (Human).